The following is a 764-amino-acid chain: 5-methyltetrahydropteroyltriglutamate--homocysteine methyltransferase (764 aa).

5-methyltetrahydropteroyltri-L-glutamate is bound by residues 16-19 (RELK) and K115. L-homocysteine is bound by residues 435-437 (IGS) and E488. L-methionine-binding positions include 435 to 437 (IGS) and E488. 5-methyltetrahydropteroyltri-L-glutamate-binding positions include 519–520 (RC) and W565. D603 lines the L-homocysteine pocket. D603 contacts L-methionine. Residue E609 coordinates 5-methyltetrahydropteroyltri-L-glutamate. Zn(2+) contacts are provided by H645, C647, and E669. Catalysis depends on H698, which acts as the Proton donor. C730 provides a ligand contact to Zn(2+).

This sequence belongs to the vitamin-B12 independent methionine synthase family. Zn(2+) serves as cofactor.

The catalysed reaction is 5-methyltetrahydropteroyltri-L-glutamate + L-homocysteine = tetrahydropteroyltri-L-glutamate + L-methionine. Its pathway is amino-acid biosynthesis; L-methionine biosynthesis via de novo pathway; L-methionine from L-homocysteine (MetE route): step 1/1. Its function is as follows. Catalyzes the transfer of a methyl group from 5-methyltetrahydrofolate to homocysteine resulting in methionine formation. The sequence is that of 5-methyltetrahydropteroyltriglutamate--homocysteine methyltransferase from Burkholderia pseudomallei (strain 668).